A 420-amino-acid polypeptide reads, in one-letter code: 3-isopropylmalate dehydratase large subunit (420 aa).

[4Fe-4S] cluster-binding residues include Cys-300, Cys-361, and Cys-364.

It belongs to the aconitase/IPM isomerase family. LeuC type 2 subfamily. As to quaternary structure, heterodimer of LeuC and LeuD. The cofactor is [4Fe-4S] cluster.

It catalyses the reaction (2R,3S)-3-isopropylmalate = (2S)-2-isopropylmalate. It functions in the pathway amino-acid biosynthesis; L-leucine biosynthesis; L-leucine from 3-methyl-2-oxobutanoate: step 2/4. Catalyzes the isomerization between 2-isopropylmalate and 3-isopropylmalate, via the formation of 2-isopropylmaleate. The polypeptide is 3-isopropylmalate dehydratase large subunit (Endomicrobium trichonymphae).